We begin with the raw amino-acid sequence, 421 residues long: Non-homologous end-joining factor LIF1 (421 aa).

The interaction with NEJ1 stretch occupies residues 1 to 196 (MSQLTEFISC…VEQLAREREL (196 aa)). A disordered region spans residues 365–421 (GIQISAGRSDEDYGDISGSESETDASAGEKKSSNHSEQSGNDREPCLQTESETDIET). The span at 391–409 (AGEKKSSNHSEQSGNDREP) shows a compositional bias: basic and acidic residues.

The protein belongs to the XRCC4-XLF family. XLF subfamily. Interacts with DNL4 (via BRCT domain). Interacts (via N-terminus) with NEJ1 (via C-terminus); the interaction is direct. The DNL4-LIF1 complex interacts with POL4.

It is found in the cytoplasm. It localises to the nucleus. Functionally, involved in non-homologous repair of DNA double-strand breaks. Stabilizes DNL4. The sequence is that of Non-homologous end-joining factor LIF1 (LIF1) from Saccharomyces cerevisiae (strain ATCC 204508 / S288c) (Baker's yeast).